The chain runs to 391 residues: Mannose-6-phosphate isomerase (391 aa).

Residues glutamine 97, histidine 99, glutamate 134, and histidine 255 each coordinate Zn(2+). Arginine 274 is an active-site residue.

This sequence belongs to the mannose-6-phosphate isomerase type 1 family. It depends on Zn(2+) as a cofactor.

It is found in the cytoplasm. The enzyme catalyses D-mannose 6-phosphate = D-fructose 6-phosphate. Functionally, involved in the conversion of glucose to GDP-L-fucose, which can be converted to L-fucose, a capsular polysaccharide. The sequence is that of Mannose-6-phosphate isomerase (manA) from Salmonella typhimurium (strain LT2 / SGSC1412 / ATCC 700720).